A 307-amino-acid chain; its full sequence is Peroxisomal protein PEX21 (307 aa).

A Glycyl cysteine thioester (Cys-Gly) (interchain with G-Cter in ubiquitin) cross-link involves residue Cys-4. The segment at 23–52 (VGRVGGFNRPSGGLGQSSAEQQLQARAGER) is disordered.

The protein belongs to the peroxin-21 family. As to quaternary structure, interacts with PEX7. Post-translationally, monoubiquitinated at Cys-4; acts as a signal for PEX21 extraction and is required for proper export from peroxisomes and recycling.

It is found in the cytoplasm. It localises to the cytosol. The protein localises to the peroxisome. In terms of biological role, mediates peroxisomal import of proteins containing a C-terminal PTS2-type peroxisomal targeting signal via its interaction with PEX7. Interaction with PEX7 only takes place when PEX7 is associated with cargo proteins containing a PTS2 peroxisomal targeting signal. PEX7 along with PTS2-containing cargo proteins are then translocated through the PEX13-PEX14 docking complex together with PEX21. This is Peroxisomal protein PEX21 (PEX21) from Eremothecium gossypii (strain ATCC 10895 / CBS 109.51 / FGSC 9923 / NRRL Y-1056) (Yeast).